Reading from the N-terminus, the 1178-residue chain is Autophagy-related protein 11 (1178 aa).

Coiled-coil stretches lie at residues glutamate 538–threonine 572 and serine 696–glutamate 850.

Belongs to the ATG11 family. Homodimer and potential homooligomers. Interacts with ATG1 kinase. Interacts with the ATG19 cargo protein transporter. Interacts with the ATG34 cargo protein transporter. Interacts with ATG9. Interacts with ATG17. Interacts with ATG20. Interacts with ATG30. Interacts with ATG32; to recruit ATG11 to mitochondria. Interacts with ATG36. Interacts with YPT1. Post-translationally, acetylated by the NuA4 histone acetyltransferase (HAT) complex.

It is found in the preautophagosomal structure membrane. Its subcellular location is the vacuole membrane. Its function is as follows. Involved in cytoplasm to vacuole transport (Cvt), pexophagy, mitophagy and nucleophagy. Recruits mitochondria for their selective degradation via autophagy (mitophagy) during starvation, through its interaction with ATG32. Works as scaffold proteins that recruit ATG proteins to the pre-autophagosome (PAS), the site of vesicle/autophagosome formation. Required for ATG9 anterograde transport from the mitochondria to the PAS. Also recruits the ATG19-prAPE1 complex to the PAS. Required for the Cvt vesicles completion. Plays a significant role in life span extension. The sequence is that of Autophagy-related protein 11 (ATG11) from Saccharomyces cerevisiae (strain ATCC 204508 / S288c) (Baker's yeast).